The sequence spans 472 residues: 2-methylcitrate synthase, mitochondrial (472 aa).

The transit peptide at 1-29 (MALNLTTSRRALGSLKPLTRAAFVGARGY) directs the protein to the mitochondrion. CoA contacts are provided by Arg75 and Lys193. His271 contacts oxaloacetate. Leu306 lines the CoA pocket. His307 is an active-site residue. Residues Val348, Gly350, and Tyr351 each coordinate CoA. Oxaloacetate is bound by residues His353 and Arg362. Residue His353 is part of the active site. Residues Thr402, Lys403, and Asn408 each contribute to the CoA site. Asp410 is an active-site residue. 2 residues coordinate oxaloacetate: Arg436 and Arg456.

It belongs to the citrate synthase family. As to quaternary structure, homodimer.

The protein resides in the mitochondrion matrix. It carries out the reaction propanoyl-CoA + oxaloacetate + H2O = (2S,3S)-2-methylcitrate + CoA + H(+). The catalysed reaction is oxaloacetate + acetyl-CoA + H2O = citrate + CoA + H(+). It functions in the pathway organic acid metabolism; propanoate degradation. Functionally, component of the methylcitrate cycle that catalyzes the synthesis of (2S,3S)-2-methylcitrate from propionyl-CoA and oxaloacetate. Plays an important role in detoxification of propionyl-CoA, an inhibitor of both primary and secondary metabolism. Also has citrate synthase activity using as substrates acetyl-CoA and oxaloacetate. The protein is 2-methylcitrate synthase, mitochondrial of Fusarium solani (Filamentous fungus).